The primary structure comprises 372 residues: Probable G-protein coupled receptor 45 (372 aa).

Over 1–38 (MACNSTSLEAYTYLLLNTSNASDSGSTQLPAPLRISLA) the chain is Extracellular. Asn-4, Asn-17, and Asn-20 each carry an N-linked (GlcNAc...) asparagine glycan. The helical transmembrane segment at 39–59 (IVMLLMTVVGFLGNTVVCIIV) threads the bilayer. Residues 60–75 (YQRPAMRSAINLLLAT) are Cytoplasmic-facing. A helical transmembrane segment spans residues 76-96 (LAFSDIMLSLCCMPFTAVTLI). Residues 97–109 (TVRWHFGDHFCRL) are Extracellular-facing. A helical membrane pass occupies residues 110-130 (SATLYWFFVLEGVAILLIISV). Topologically, residues 131 to 149 (DRFLIIVQRQDKLNPRRAK) are cytoplasmic. The helical transmembrane segment at 150–170 (VIIAVSWVLSFCIAGPSLTGW) threads the bilayer. Topologically, residues 171 to 198 (TLVEVPARAPQCVLGYTELPADRAYVVT) are extracellular. Residues 199-219 (LVVAVFFAPFGVMLCAYMCIL) traverse the membrane as a helical segment. Residues 220–268 (NTVRKNAVRVHNQSDSLDLRQLTRAGLRRLQRQQQVSVDLSFKTKAFTT) lie on the Cytoplasmic side of the membrane. The helical transmembrane segment at 269 to 289 (ILILFVGFSLCWLPHSVYSLL) threads the bilayer. At 290–305 (SVFSQRFYCGSSFYAT) the chain is on the extracellular side. Residues 306 to 326 (STCVLWLSYLKSVFNPIVYCW) traverse the membrane as a helical segment. The Cytoplasmic segment spans residues 327 to 372 (RIKKFREACIELLPQTFQILPKVPERIRRRIQPSTVYVCNENQSAV).

It belongs to the G-protein coupled receptor 1 family. As to expression, expressed in brain; detected in the basal forebrain, frontal cortex, and caudate, but not in thalamus, hippocampus, or putamen.

Its subcellular location is the cell membrane. Functionally, orphan receptor. May play a role in brain function. The polypeptide is Probable G-protein coupled receptor 45 (GPR45) (Homo sapiens (Human)).